Consider the following 106-residue polypeptide: Late cornified envelope protein 2A (106 aa).

Residues M1 to C10 show a composition bias toward low complexity. The interval M1–P25 is disordered. Pro residues predominate over residues Q11–P25.

The protein belongs to the LCE family. As to quaternary structure, interacts with CYSRT1. Skin-specific. Expression was readily detected in adult trunk skin, adult arm skin, fetal skin, penal skin, vulva, esophagus and tongue. Not expressed in the cervix, rectum, lung, colon, or placenta.

Its function is as follows. Precursors of the cornified envelope of the stratum corneum. The polypeptide is Late cornified envelope protein 2A (LCE2A) (Homo sapiens (Human)).